A 305-amino-acid chain; its full sequence is Sulfate adenylyltransferase subunit 2 (305 aa).

It belongs to the PAPS reductase family. CysD subfamily. As to quaternary structure, heterodimer composed of CysD, the smaller subunit, and CysN.

It carries out the reaction sulfate + ATP + H(+) = adenosine 5'-phosphosulfate + diphosphate. It functions in the pathway sulfur metabolism; hydrogen sulfide biosynthesis; sulfite from sulfate: step 1/3. With CysN forms the ATP sulfurylase (ATPS) that catalyzes the adenylation of sulfate producing adenosine 5'-phosphosulfate (APS) and diphosphate, the first enzymatic step in sulfur assimilation pathway. APS synthesis involves the formation of a high-energy phosphoric-sulfuric acid anhydride bond driven by GTP hydrolysis by CysN coupled to ATP hydrolysis by CysD. The protein is Sulfate adenylyltransferase subunit 2 of Pseudomonas fluorescens (strain ATCC BAA-477 / NRRL B-23932 / Pf-5).